The sequence spans 484 residues: MFPNSILGRPPFTPTHQQHNNFFALSPTLYSHQQLIDAQFNFQNVDLSRAVSLQPLTYGTVSPIQTSTSPLFRGRKRISDEKAFPLDGKRQRFHSPHQEPTIINQLVPLSGDRRYSMPPLFHTHYIPDIVRCVPPLREIPLLEPREITLPEAKDKLSQQILELFETCQQQASDLKKKELCRAQLQREIQLLFPQSRLFLVGSSLNGFGARSSDGDLCLVVKEEPCFFQVNQKTEARHILTLVHKHFCTRLSGYIERPQLIRAKVPIVKFRDKVSCVEFDLNVNNTVGIRNTFLLRTYAYLENRVRPLVLVIKKWASHHDINDASRGTLSSYSLVLMVLHYLQTLPEPILPSLQKIYPESFSTSVQLHLVHHAPCNVPPYLSKNESSLGDLLLGFLKYYATEFDWNTQMISVREAKAIPRPDDMEWRNKYICVEEPFDGTNTARAVHEKQKFDMIKDQFLKSWQRLKNKRDLNSVLPLRAATLKR.

Phosphoserine is present on residues Ser-62 and Ser-69. The short motif at 76–92 (KRISDEKAFPLDGKRQR) is the Nuclear localization signal element. At Ser-95 the chain carries Phosphoserine. Positions 213 and 215 each coordinate Mg(2+). The PAP-associated domain maps to 386–440 (SLGDLLLGFLKYYATEFDWNTQMISVREAKAIPRPDDMEWRNKYICVEEPFDGTN).

This sequence belongs to the DNA polymerase type-B-like family. GLD2 subfamily. In terms of assembly, interacts with CPEB1, CPEB2, CPSF1 and PABPC1. Interacts with QKI isoform QKI7; promoting recruitment to miRNA miR-122 and miR-122 stabilization. Mg(2+) is required as a cofactor. It depends on Mn(2+) as a cofactor. In terms of tissue distribution, ubiquitous. In brain, it is highly expressed in the cerebral cortex, cerebellum, hippocampus and olfactory bulb.

It localises to the cytoplasm. It is found in the nucleus. It carries out the reaction RNA(n) + ATP = RNA(n)-3'-adenine ribonucleotide + diphosphate. In terms of biological role, cytoplasmic poly(A) RNA polymerase that adds successive AMP monomers to the 3'-end of specific RNAs, forming a poly(A) tail. In contrast to the canonical nuclear poly(A) RNA polymerase, it only adds poly(A) to selected cytoplasmic mRNAs. Does not play a role in replication-dependent histone mRNA degradation. Adds a single nucleotide to the 3' end of specific miRNAs, monoadenylation stabilizes and prolongs the activity of some but not all miRNAs. This is Poly(A) RNA polymerase GLD2 (Tent2) from Mus musculus (Mouse).